We begin with the raw amino-acid sequence, 272 residues long: HTH-type transcriptional repressor AllR (272 aa).

Residues 1–20 form a disordered region; sequence MTEVRRRGRPGQQEPSAQKG. Residues 21–83 enclose the HTH iclR-type domain; sequence AQALERGIAI…SQLGWWHIGL (63 aa). Positions 43–62 form a DNA-binding region, H-T-H motif; the sequence is VSDISLNLDLPLSTTFRLLK. In terms of domain architecture, IclR-ED spans 98 to 267; the sequence is VLSVGGPFMR…ARNISTALGL (170 aa). Residues 154 to 156, Asp207, Cys217, and 234 to 236 contribute to the glyoxylate site; these read SGA and SIS.

Functionally, negative regulator of allantoin and glyoxylate utilization operons. Binds to the gcl promoter and to the allS-allA intergenic region. This chain is HTH-type transcriptional repressor AllR (allR), found in Klebsiella pneumoniae.